We begin with the raw amino-acid sequence, 121 residues long: uncharacterized protein (121 aa).

3 helical membrane passes run 12 to 32, 35 to 55, and 67 to 87; these read MIGI…HPGV, VIQP…FGGL, and VFVV…YVGD.

Belongs to the sbp family.

The protein resides in the cell membrane. This is an uncharacterized protein from Mycobacterium bovis (strain ATCC BAA-935 / AF2122/97).